Consider the following 89-residue polypeptide: Small ribosomal subunit protein bS16 (89 aa).

The protein belongs to the bacterial ribosomal protein bS16 family.

In Geobacillus stearothermophilus (Bacillus stearothermophilus), this protein is Small ribosomal subunit protein bS16.